Consider the following 340-residue polypeptide: Heat-inducible transcription repressor HrcA (340 aa).

It belongs to the HrcA family.

Its function is as follows. Negative regulator of class I heat shock genes (grpE-dnaK-dnaJ and groELS operons). Prevents heat-shock induction of these operons. The polypeptide is Heat-inducible transcription repressor HrcA (Burkholderia thailandensis (strain ATCC 700388 / DSM 13276 / CCUG 48851 / CIP 106301 / E264)).